A 512-amino-acid polypeptide reads, in one-letter code: GMP synthase [glutamine-hydrolyzing] (512 aa).

A Glutamine amidotransferase type-1 domain is found at 3 to 196 (NILILDFGSQ…VKHICQASET (194 aa)). The active-site Nucleophile is the Cys80. Catalysis depends on residues His169 and Glu171. The 191-residue stretch at 197–387 (WKIETIEKQL…LGLPDVLISR (191 aa)) folds into the GMPS ATP-PPase domain. 225 to 231 (SGGVDSS) serves as a coordination point for ATP.

As to quaternary structure, homodimer.

It catalyses the reaction XMP + L-glutamine + ATP + H2O = GMP + L-glutamate + AMP + diphosphate + 2 H(+). It participates in purine metabolism; GMP biosynthesis; GMP from XMP (L-Gln route): step 1/1. Functionally, catalyzes the synthesis of GMP from XMP. The protein is GMP synthase [glutamine-hydrolyzing] of Chlamydia caviae (strain ATCC VR-813 / DSM 19441 / 03DC25 / GPIC) (Chlamydophila caviae).